Consider the following 431-residue polypeptide: Translation initiation factor 2 subunit gamma (431 aa).

Positions 26–223 (QPCVNIGMVG…ALETQIPTPS (198 aa)) constitute a tr-type G domain. The interval 35 to 42 (GHVDHGKT) is G1. Mg(2+)-binding residues include aspartate 38, threonine 42, glycine 63, and serine 65. Residue 38–43 (DHGKTT) coordinates GTP. The interval 63–67 (GISIR) is G2. 4 residues coordinate Zn(2+): cysteine 78, cysteine 81, cysteine 93, and cysteine 96. Residues 110–113 (DAPG) are G3. Residues 166–169 (NKID) and 201–203 (SAQ) each bind GTP. Residues 166 to 169 (NKID) form a G4 region. Positions 201–203 (SAQ) are G5.

The protein belongs to the TRAFAC class translation factor GTPase superfamily. Classic translation factor GTPase family. EIF2G subfamily. Heterotrimer composed of an alpha, a beta and a gamma chain. It depends on Mg(2+) as a cofactor.

It catalyses the reaction GTP + H2O = GDP + phosphate + H(+). Functionally, eIF-2 functions in the early steps of protein synthesis by forming a ternary complex with GTP and initiator tRNA. This Methanosarcina mazei (strain ATCC BAA-159 / DSM 3647 / Goe1 / Go1 / JCM 11833 / OCM 88) (Methanosarcina frisia) protein is Translation initiation factor 2 subunit gamma.